Consider the following 529-residue polypeptide: Probable cytochrome P450 6t1 (529 aa).

Cysteine 472 provides a ligand contact to heme.

It belongs to the cytochrome P450 family. The cofactor is heme.

The protein localises to the endoplasmic reticulum membrane. It is found in the microsome membrane. May be involved in the metabolism of insect hormones and in the breakdown of synthetic insecticides. The polypeptide is Probable cytochrome P450 6t1 (Cyp6t1) (Drosophila melanogaster (Fruit fly)).